A 412-amino-acid polypeptide reads, in one-letter code: Putative competence-damage inducible protein (412 aa).

This sequence belongs to the CinA family.

This chain is Putative competence-damage inducible protein, found in Bacillus cereus (strain B4264).